The primary structure comprises 211 residues: MTFAIPDDLAPEVYPLAWLLGRWRGPGFLAYPDIPERPVVVETEFTHDGGPYLAYASTTWLLDGELAGLDRPFDPEALAAGQLWAAESGYWRPVVGGPRRSAFGVVQEGSDTRTEPGGAEPDPAGRRAPSTEVEVLLAEPSGHVSVFVGSVRGPRIDLATDLVARTSTAAEVTAATRMYGLVQGDLMWATDLAAFGHEMQSYSSGRLARMA.

Residues 21–27 (GRWRGPG) carry the GXWXGXG motif. A disordered region spans residues 104 to 130 (GVVQEGSDTRTEPGGAEPDPAGRRAPS).

It belongs to the nitrobindin family.

In Beutenbergia cavernae (strain ATCC BAA-8 / DSM 12333 / CCUG 43141 / JCM 11478 / NBRC 16432 / NCIMB 13614 / HKI 0122), this protein is Ferric nitrobindin-like protein.